Reading from the N-terminus, the 156-residue chain is Small ribosomal subunit protein uS7 (156 aa).

This sequence belongs to the universal ribosomal protein uS7 family. As to quaternary structure, part of the 30S ribosomal subunit. Contacts proteins S9 and S11.

Its function is as follows. One of the primary rRNA binding proteins, it binds directly to 16S rRNA where it nucleates assembly of the head domain of the 30S subunit. Is located at the subunit interface close to the decoding center, probably blocks exit of the E-site tRNA. The polypeptide is Small ribosomal subunit protein uS7 (Thermoanaerobacter pseudethanolicus (strain ATCC 33223 / 39E) (Clostridium thermohydrosulfuricum)).